Here is a 148-residue protein sequence, read N- to C-terminus: MKTLFLLALLALVASTTFAQYSEVGGWYNEVGGGGGSQQCPQERPKLSSCKDYVMERCFTMKDFPVTWPTKWWKGGCEHEVREKCCKQLSQIAPQCRCDSIRRVIQGRLGGFLGIWRGEVFKQLQRAQSLPSKCNMGADCKFPSGYYW.

The N-terminal stretch at 1–19 (MKTLFLLALLALVASTTFA) is a signal peptide. Residues 20 to 29 (QYSEVGGWYN) constitute a propeptide that is removed on maturation.

In terms of processing, five disulfide bonds are present. As to expression, endosperm and aleurone layer of developing kernels. In the aleurone layer, mainly localized to starch granules and the surface of the plasma membrane, forming a uniform layer, also abundant in the intercellular space. In the endosperm, mainly localized to starch granules and the plasma membrane, but less abundant in the intercellular space. Not found in roots or coleoptiles.

The protein resides in the membrane. It is found in the secreted. Its subcellular location is the extracellular space. In terms of biological role, acts as a membranotoxin, probably through its antibacterial and antifungal activities, contributing to the defense mechanism of the plant against predators. Forms monovalent cation-selective ion channels in membranes. Has antibacterial activity against the Gram-positive bacteria S.aureus and C.michiganensis, and the Gram-negative bacteria E.coli, P.syringae pv phaseoli, A.tumefaciens and E.carotovora subsp carotovora. Acts synergistically with PINA against bacteria. Contributes to grain texture and hardness. In Triticum aestivum (Wheat), this protein is Puroindoline-B (PINB).